The chain runs to 314 residues: Homoserine kinase (314 aa).

95–105 (PHSRGLGSSAS) provides a ligand contact to ATP.

Belongs to the GHMP kinase family. Homoserine kinase subfamily.

Its subcellular location is the cytoplasm. It carries out the reaction L-homoserine + ATP = O-phospho-L-homoserine + ADP + H(+). It participates in amino-acid biosynthesis; L-threonine biosynthesis; L-threonine from L-aspartate: step 4/5. Its function is as follows. Catalyzes the ATP-dependent phosphorylation of L-homoserine to L-homoserine phosphate. In Rhodococcus erythropolis (strain PR4 / NBRC 100887), this protein is Homoserine kinase.